Here is a 310-residue protein sequence, read N- to C-terminus: Ribosomal protein uL3 glutamine methyltransferase (310 aa).

Belongs to the protein N5-glutamine methyltransferase family. PrmB subfamily.

The catalysed reaction is L-glutaminyl-[ribosomal protein uL3] + S-adenosyl-L-methionine = N(5)-methyl-L-glutaminyl-[ribosomal protein uL3] + S-adenosyl-L-homocysteine + H(+). Its function is as follows. Methylates large ribosomal subunit protein uL3 on a specific glutamine residue. The chain is Ribosomal protein uL3 glutamine methyltransferase from Aliivibrio fischeri (strain ATCC 700601 / ES114) (Vibrio fischeri).